The sequence spans 108 residues: Small ribosomal subunit protein eS25w (108 aa).

The interval 1–36 is disordered; the sequence is MAPKKDKVPPPSSKPAKSGGGKQKKKKWSKGKQKEK. Residues 22 to 31 are compositionally biased toward basic residues; the sequence is KQKKKKWSKG.

Belongs to the eukaryotic ribosomal protein eS25 family.

The polypeptide is Small ribosomal subunit protein eS25w (RPS25E) (Arabidopsis thaliana (Mouse-ear cress)).